The primary structure comprises 559 residues: Polypeptide N-acetylgalactosaminyltransferase 1 (559 aa).

At Met1–Lys8 the chain is on the cytoplasmic side. A helical; Signal-anchor for type II membrane protein transmembrane segment spans residues Val9–Phe28. The Lumenal segment spans residues Ser29 to Phe559. A disordered region spans residues Gly45–Val65. Asn95 carries an N-linked (GlcNAc...) asparagine glycan. 5 disulfides stabilise this stretch: Cys106–Cys339, Cys330–Cys408, Cys442–Cys459, Cys482–Cys497, and Cys523–Cys540. The interval Leu115–Arg225 is catalytic subdomain A. The substrate site is built by Asp156 and Arg186. Asp209 and His211 together coordinate Mn(2+). The catalytic subdomain B stretch occupies residues Pro285–Arg347. A substrate-binding site is contributed by Trp316. His344 contributes to the Mn(2+) binding site. Residues Arg347 and Tyr352 each coordinate substrate. Residues Phe429–Arg551 enclose the Ricin B-type lectin domain. An N-linked (GlcNAc...) asparagine glycan is attached at Asn552.

This sequence belongs to the glycosyltransferase 2 family. GalNAc-T subfamily. Requires Mn(2+) as cofactor. Widely expressed. Expressed in all tissues tested.

It localises to the golgi apparatus. It is found in the golgi stack membrane. The protein localises to the secreted. The enzyme catalyses L-seryl-[protein] + UDP-N-acetyl-alpha-D-galactosamine = a 3-O-[N-acetyl-alpha-D-galactosaminyl]-L-seryl-[protein] + UDP + H(+). It catalyses the reaction L-threonyl-[protein] + UDP-N-acetyl-alpha-D-galactosamine = a 3-O-[N-acetyl-alpha-D-galactosaminyl]-L-threonyl-[protein] + UDP + H(+). The protein operates within protein modification; protein glycosylation. Catalyzes the initial reaction in O-linked oligosaccharide biosynthesis, the transfer of an N-acetyl-D-galactosamine residue to a serine or threonine residue on the protein receptor. Has a broad spectrum of substrates such as apomucin-, MUC5AC-, MUC1- and MUC2-derived peptides. The protein is Polypeptide N-acetylgalactosaminyltransferase 1 of Homo sapiens (Human).